A 328-amino-acid chain; its full sequence is Pleckstrin homology domain protein OPY1 (328 aa).

A disordered region spans residues N19–H52. A compositionally biased stretch (polar residues) spans P24 to N41. The segment at A213–I328 is required for targeting to the cell membrane. Residues H215–L318 form the PH domain.

Interacts with MSS4 (via N-terminus); to negatively regulate MSS4 kinase activity.

It is found in the cell membrane. The protein resides in the cytoplasm. Its function is as follows. Binds phosphatidylinositol 4,5-bisphosphate (PtdIns(4,5)P2/PIP2) at the cell membrane. Negatively regulates the activity of phosphatidylinositol 4-phosphate 5-kinase MSS4. This chain is Pleckstrin homology domain protein OPY1 (OPY1), found in Saccharomyces cerevisiae (strain ATCC 204508 / S288c) (Baker's yeast).